Consider the following 469-residue polypeptide: 3-isopropylmalate dehydratase large subunit (469 aa).

3 residues coordinate [4Fe-4S] cluster: cysteine 350, cysteine 410, and cysteine 413.

It belongs to the aconitase/IPM isomerase family. LeuC type 1 subfamily. Heterodimer of LeuC and LeuD. Requires [4Fe-4S] cluster as cofactor.

It carries out the reaction (2R,3S)-3-isopropylmalate = (2S)-2-isopropylmalate. Its pathway is amino-acid biosynthesis; L-leucine biosynthesis; L-leucine from 3-methyl-2-oxobutanoate: step 2/4. Its function is as follows. Catalyzes the isomerization between 2-isopropylmalate and 3-isopropylmalate, via the formation of 2-isopropylmaleate. This is 3-isopropylmalate dehydratase large subunit from Brucella abortus (strain S19).